The primary structure comprises 65 residues: Putative beta-neurotoxin RjAa12 (65 aa).

Positions 1 to 64 (KEGYPVGRDG…VWDSSTNKCG (64 aa)) constitute an LCN-type CS-alpha/beta domain. Intrachain disulfides connect Cys-11-Cys-63, Cys-15-Cys-37, Cys-22-Cys-44, and Cys-26-Cys-46.

The protein belongs to the long (4 C-C) scorpion toxin superfamily. Sodium channel inhibitor family. Beta subfamily. In terms of tissue distribution, expressed by the venom gland.

It localises to the secreted. Its function is as follows. Beta toxins bind voltage-independently at site-4 of sodium channels (Nav) and shift the voltage of activation toward more negative potentials thereby affecting sodium channel activation and promoting spontaneous and repetitive firing. In Rhopalurus junceus (Caribbean blue scorpion), this protein is Putative beta-neurotoxin RjAa12.